Here is a 138-residue protein sequence, read N- to C-terminus: ATP synthase epsilon chain (138 aa).

A disordered region spans residues 88–119 (DREEARSTLSAAQARLDQSEQSEDKQERYEAQ). The span at 109-119 (SEDKQERYEAQ) shows a compositional bias: basic and acidic residues.

Belongs to the ATPase epsilon chain family. F-type ATPases have 2 components, CF(1) - the catalytic core - and CF(0) - the membrane proton channel. CF(1) has five subunits: alpha(3), beta(3), gamma(1), delta(1), epsilon(1). CF(0) has three main subunits: a, b and c.

The protein resides in the cellular thylakoid membrane. Functionally, produces ATP from ADP in the presence of a proton gradient across the membrane. The chain is ATP synthase epsilon chain from Acaryochloris marina (strain MBIC 11017).